Reading from the N-terminus, the 70-residue chain is uncharacterized protein (70 aa).

This is an uncharacterized protein from Acidianus convivator (ATV).